Reading from the N-terminus, the 492-residue chain is GTPase Der (492 aa).

EngA-type G domains are found at residues 3-166 (PVVA…MDDV) and 205-378 (IKLA…DSST). GTP is bound by residues 9–16 (GRPNVGKS), 56–60 (DTGGI), 118–121 (NKTD), 211–218 (GRPNVGKS), 258–262 (DTAGV), and 323–326 (NKWD). In terms of domain architecture, KH-like spans 379–463 (RRVSTALLTR…PIRIQFKEGA (85 aa)).

Belongs to the TRAFAC class TrmE-Era-EngA-EngB-Septin-like GTPase superfamily. EngA (Der) GTPase family. In terms of assembly, associates with the 50S ribosomal subunit.

Functionally, GTPase that plays an essential role in the late steps of ribosome biogenesis. In Cronobacter sakazakii (strain ATCC BAA-894) (Enterobacter sakazakii), this protein is GTPase Der.